Here is a 254-residue protein sequence, read N- to C-terminus: 3-deoxy-manno-octulosonate cytidylyltransferase (254 aa).

The protein belongs to the KdsB family.

The protein resides in the cytoplasm. The catalysed reaction is 3-deoxy-alpha-D-manno-oct-2-ulosonate + CTP = CMP-3-deoxy-beta-D-manno-octulosonate + diphosphate. Its pathway is nucleotide-sugar biosynthesis; CMP-3-deoxy-D-manno-octulosonate biosynthesis; CMP-3-deoxy-D-manno-octulosonate from 3-deoxy-D-manno-octulosonate and CTP: step 1/1. The protein operates within bacterial outer membrane biogenesis; lipopolysaccharide biosynthesis. Its function is as follows. Activates KDO (a required 8-carbon sugar) for incorporation into bacterial lipopolysaccharide in Gram-negative bacteria. The protein is 3-deoxy-manno-octulosonate cytidylyltransferase of Pseudomonas paraeruginosa (strain DSM 24068 / PA7) (Pseudomonas aeruginosa (strain PA7)).